The following is a 613-amino-acid chain: RNA polymerase-associated protein RTF1 homolog (613 aa).

Disordered regions lie at residues 1 to 90 (MSSS…DKAR) and 121 to 247 (QQLA…KDKI). The span at 55–68 (PAKKKTLTKRKRRA) shows a compositional bias: basic residues. Residues 72-81 (SDDDQVDDDL) show a composition bias toward acidic residues. The segment covering 167-176 (AAFHRPSDIN) has biased composition (basic and acidic residues). Residues 175-209 (INRKHKEKNAMDALKNKRKEIEKKNAKNEALSIDA) adopt a coiled-coil conformation. Residues 215–235 (SGSSSSSSSSESSRSSSSSRE) show a composition bias toward low complexity. The segment covering 236–247 (SSPERVSEKDKI) has biased composition (basic and acidic residues). Residues 252-383 (VDGLSELRRA…KKQDIEKAIN (132 aa)) form the Plus3 domain. Positions 425–462 (RGDIREAEQIQTKIDEIERQADELEKERSKSISAIAFI) form a coiled coil. Disordered stretches follow at residues 485–549 (SQDD…KTDI) and 564–613 (LKDF…SSAV). Positions 510–521 (TLSASSSTTNLS) are enriched in low complexity. Residues 569-586 (TPESSGNKRPSISSSKGV) are compositionally biased toward polar residues. Residues 602-613 (GSSTSAAPSSAV) are compositionally biased toward low complexity.

Component of the PAF1 complex which consists of at least cdc-73, ctr-9, leo-1, pafo-1 and rtfo-1.

The protein localises to the nucleus. In terms of biological role, component of the PAF1 complex which is a multifunctional complex involved in transcription initiation via genetic interactions with TATA-binding proteins, elongation and transcription-coupled histone modification. The sequence is that of RNA polymerase-associated protein RTF1 homolog from Caenorhabditis elegans.